A 529-amino-acid chain; its full sequence is MELPQPRPFKTQGRKPTHDFLSLCSHSTVHPDPKPTPPPSSQGSHLKTHDFLQPLECVGAKEDVSRINSTTTASEKPPPPAPPPPLQHVLPGGIGTYTISPIPYFHHHHQRIPKPELSPPMMFNANERNVLDENSNSNCSSYAAASSGFTLWDESASGKKGQTRKENSVGERVNMRADVAATVGQWPVAERRSQSLTNNHMSGFSSLSSSQGSVLKSQSFMDMIRSAKGSSQEDDLDDEEDFIMKKESSSTSQSHRVDLRVKADVRGSPNDQKLNTPRSKHSATEQRRRSKINDRFQMLRQLIPNSDQKRDKASFLLEVIEYIQFLQEKADKYVTSYQGWNHEPAKLLNWQSNNNQQLVPEGVAFAPKLEEEKNNIPVSVLATAQGVVIDHPTTATTSPFPLSIQSNSFFSPVIAGNPVPQFHARVASSEAVEPSPSSRSQKEEEDEEVLEGNIRISSVYSQGLVKTLREALENSGVDLTKASISVEIELAKQSSSSSFKDHEVREPVSRTRNDNVKQTRKPKRLKTGQ.

Disordered stretches follow at residues 1-91 (MELP…HVLP), 245-291 (KKES…RRSK), 425-450 (RVAS…EEVL), and 491-529 (AKQS…KTGQ). Residues 76 to 86 (KPPPPAPPPPL) show a composition bias toward pro residues. 2 stretches are compositionally biased toward basic and acidic residues: residues 255-265 (HRVDLRVKADV) and 282-291 (SATEQRRRSK). The 51-residue stretch at 276–326 (TPRSKHSATEQRRRSKINDRFQMLRQLIPNSDQKRDKASFLLEVIEYIQFL) folds into the bHLH domain. Residues 426-438 (VASSEAVEPSPSS) show a composition bias toward low complexity. Over residues 499 to 517 (FKDHEVREPVSRTRNDNVK) the composition is skewed to basic and acidic residues. Positions 518-529 (QTRKPKRLKTGQ) are enriched in basic residues.

Homodimer. Interacts with BZR2/BES1 through both C-terminal and bHLH domains. Also interacts with LHW. In terms of tissue distribution, expressed constitutively in roots.

It is found in the nucleus. Its function is as follows. Positive brassinosteroid-signaling protein. Transcription factor that bind specifically to the DNA sequence 5'-CANNTG-3'(E box). Can bind individually to the promoter as a homodimer or synergistically as a heterodimer with BZR2/BES1. Does not itself activate transcription but enhances BZR2/BES1-mediated target gene activation. This chain is Transcription factor BIM1 (BIM1), found in Arabidopsis thaliana (Mouse-ear cress).